A 146-amino-acid chain; its full sequence is Snaclec mucetin subunit beta (146 aa).

A signal peptide spans M1–A23. 3 disulfides stabilise this stretch: C27–C38, C55–C144, and C121–C136. One can recognise a C-type lectin domain in the interval Y34 to K145.

It belongs to the snaclec family. Dimer and tetramer of heterodimers of alpha and beta subunits ((alphabeta)(2) and (alphabeta)(4)); disulfide-linked. These two multimeric forms are found. Post-translationally, the complex is glycosylated. As to expression, expressed by the venom gland.

The protein resides in the secreted. Its function is as follows. Potent platelet activator that acts via GPIb (GP1BA/GP1BB). After activation by the toxin, the receptor is redistributed on platelet surface thanks to cytoskeletal translocation. The indirect activation of integrin alpha-IIb/beta-3 (ITGA2B/ITGB3) also induced by the toxin is downstream the cytoskeletal translocation of GPIb. The protein is Snaclec mucetin subunit beta of Protobothrops mucrosquamatus (Taiwan habu).